Reading from the N-terminus, the 224-residue chain is Dehydration-responsive element-binding protein 1G (224 aa).

Positions M1 to P16 are enriched in polar residues. Residues M1–K46 are disordered. A DNA-binding region (AP2/ERF) is located at residues V54 to A111.

It belongs to the AP2/ERF transcription factor family. ERF subfamily.

Its subcellular location is the nucleus. Its function is as follows. Transcriptional activator that binds specifically to the DNA sequence 5'-[AG]CCGAC-3'. Binding to the C-repeat/DRE element mediates high salinity- and dehydration-inducible transcription. In Oryza sativa subsp. indica (Rice), this protein is Dehydration-responsive element-binding protein 1G (DREB1G).